The primary structure comprises 803 residues: Phenylalanine--tRNA ligase beta subunit (803 aa).

In terms of domain architecture, tRNA-binding spans 40–150; sequence SNKFYGIVIA…IDAPIGCNFY (111 aa). The region spanning 405-480 is the B5 domain; that stretch reads PKIKIIKLHR…RIYGYNHIPK (76 aa). Asp-458 and Glu-468 together coordinate Mg(2+). The 94-residue stretch at 710 to 803 folds into the FDX-ACB domain; that stretch reads SKFPKNYRDI…LKKHFNAIFR (94 aa).

This sequence belongs to the phenylalanyl-tRNA synthetase beta subunit family. Type 1 subfamily. As to quaternary structure, tetramer of two alpha and two beta subunits. Mg(2+) serves as cofactor.

The protein resides in the cytoplasm. The enzyme catalyses tRNA(Phe) + L-phenylalanine + ATP = L-phenylalanyl-tRNA(Phe) + AMP + diphosphate + H(+). The polypeptide is Phenylalanine--tRNA ligase beta subunit (Blochmanniella floridana).